We begin with the raw amino-acid sequence, 364 residues long: Dimethylsulfoniopropionate demethylase DmdA (364 aa).

It belongs to the GcvT family. DmdA subfamily.

It catalyses the reaction S,S-dimethyl-beta-propiothetin + (6S)-5,6,7,8-tetrahydrofolate = 3-(methylsulfanyl)propanoate + (6S)-5-methyl-5,6,7,8-tetrahydrofolate + H(+). Functionally, involved in the assimilation of dimethylsulphoniopropionate (DMSP), an important compound in the fixation of carbon in marine phytoplankton, by mediating demethylation of dimethylsulfoniopropionate (DMSP) to methyl-mercaptopropionate (MMPA). The intracellular concentration of DMSP is estimated to be 70 mM. In Ruegeria pomeroyi (strain ATCC 700808 / DSM 15171 / DSS-3) (Silicibacter pomeroyi), this protein is Dimethylsulfoniopropionate demethylase DmdA.